A 507-amino-acid chain; its full sequence is UDP-N-acetylmuramoyl-L-alanyl-D-glutamate--2,6-diaminopimelate ligase (507 aa).

Ser32 is a binding site for UDP-N-acetyl-alpha-D-muramoyl-L-alanyl-D-glutamate. 117–123 (GTNGKTT) provides a ligand contact to ATP. Residues 159–160 (TT), Ser186, Gln192, and Arg194 each bind UDP-N-acetyl-alpha-D-muramoyl-L-alanyl-D-glutamate. Lys226 bears the N6-carboxylysine mark. Residues Arg400, 424–427 (DNPR), Gly475, and Glu479 contribute to the meso-2,6-diaminopimelate site. The short motif at 424 to 427 (DNPR) is the Meso-diaminopimelate recognition motif element.

It belongs to the MurCDEF family. MurE subfamily. Requires Mg(2+) as cofactor. Post-translationally, carboxylation is probably crucial for Mg(2+) binding and, consequently, for the gamma-phosphate positioning of ATP.

It is found in the cytoplasm. The catalysed reaction is UDP-N-acetyl-alpha-D-muramoyl-L-alanyl-D-glutamate + meso-2,6-diaminopimelate + ATP = UDP-N-acetyl-alpha-D-muramoyl-L-alanyl-gamma-D-glutamyl-meso-2,6-diaminopimelate + ADP + phosphate + H(+). Its pathway is cell wall biogenesis; peptidoglycan biosynthesis. Functionally, catalyzes the addition of meso-diaminopimelic acid to the nucleotide precursor UDP-N-acetylmuramoyl-L-alanyl-D-glutamate (UMAG) in the biosynthesis of bacterial cell-wall peptidoglycan. The sequence is that of UDP-N-acetylmuramoyl-L-alanyl-D-glutamate--2,6-diaminopimelate ligase from Prochlorococcus marinus (strain MIT 9313).